The chain runs to 475 residues: MSPQTETKASVGFKAGVKEYKLTYYTPDYEPHDHDILAAFRVTPQPGVPPEEAGAAVAAESSTGTWTTVWTDGLTSLDRYKGRCYHIEPVPGEENQFIAYVAYPLDLFEEGSVTNMFTSIVGNVFGFKALRALRLEDLRIPPAYTKTFQGPPHGIQVERDKLNKYGRPLLGCTIKPKLGLSAKNYGRAVYECLRGGLDFTKDDENVNSQPFMRWRDRFLFCAEALFKSQVETGEIKGHYLNATAGTCEEMIKRAVFARELGVPIVMHDYLTGGFTANTSLAHYCRDNGLLLHIHRAMHAVIDRQKNHGIHFRVLAKALRLSGGDHIHSGTVVGKLEGERDITLGFVDLLRDDFVEKDRSRGIYFTQPWVSLPGVIPVASGGIHVWHMPALTEIFGDDSVLQFGGGTLGHPWGNAPGAVANRVALEACVQARNEGRDLAREGNDIIRKAAKWSPELAAACEVWKEIKFEFQAMDTL.

Residues 1–2 constitute a propeptide that is removed on maturation; that stretch reads MS. Residue P3 is modified to N-acetylproline. The residue at position 14 (K14) is an N6,N6,N6-trimethyllysine. Substrate contacts are provided by N123 and T173. The active-site Proton acceptor is K175. K177 provides a ligand contact to substrate. Residues K201, D203, and E204 each contribute to the Mg(2+) site. An N6-carboxylysine modification is found at K201. H294 (proton acceptor) is an active-site residue. Substrate contacts are provided by R295, H327, and S379.

Belongs to the RuBisCO large chain family. Type I subfamily. As to quaternary structure, heterohexadecamer of 8 large chains and 8 small chains; disulfide-linked. The disulfide link is formed within the large subunit homodimers. The cofactor is Mg(2+). In terms of processing, the disulfide bond which can form in the large chain dimeric partners within the hexadecamer appears to be associated with oxidative stress and protein turnover.

The protein localises to the plastid. It localises to the chloroplast. The catalysed reaction is 2 (2R)-3-phosphoglycerate + 2 H(+) = D-ribulose 1,5-bisphosphate + CO2 + H2O. It catalyses the reaction D-ribulose 1,5-bisphosphate + O2 = 2-phosphoglycolate + (2R)-3-phosphoglycerate + 2 H(+). In terms of biological role, ruBisCO catalyzes two reactions: the carboxylation of D-ribulose 1,5-bisphosphate, the primary event in carbon dioxide fixation, as well as the oxidative fragmentation of the pentose substrate in the photorespiration process. Both reactions occur simultaneously and in competition at the same active site. In Fagopyrum esculentum subsp. ancestrale (Wild buckwheat), this protein is Ribulose bisphosphate carboxylase large chain.